Here is a 185-residue protein sequence, read N- to C-terminus: Ribosome-recycling factor (185 aa).

The protein belongs to the RRF family.

It localises to the cytoplasm. Functionally, responsible for the release of ribosomes from messenger RNA at the termination of protein biosynthesis. May increase the efficiency of translation by recycling ribosomes from one round of translation to another. In Shewanella sediminis (strain HAW-EB3), this protein is Ribosome-recycling factor.